Here is a 760-residue protein sequence, read N- to C-terminus: 5-methyltetrahydropteroyltriglutamate--homocysteine methyltransferase (760 aa).

Residues 17-20 and lysine 118 contribute to the 5-methyltetrahydropteroyltri-L-glutamate site; that span reads RELK. L-homocysteine contacts are provided by residues 436-438 and glutamate 489; that span reads IGS. L-methionine-binding positions include 436-438 and glutamate 489; that span reads IGS. 5-methyltetrahydropteroyltri-L-glutamate is bound by residues 520 to 521 and tryptophan 566; that span reads RC. An L-homocysteine-binding site is contributed by aspartate 604. Aspartate 604 contributes to the L-methionine binding site. Glutamate 610 lines the 5-methyltetrahydropteroyltri-L-glutamate pocket. Zn(2+)-binding residues include histidine 646, cysteine 648, and glutamate 670. Histidine 699 serves as the catalytic Proton donor. Residue cysteine 731 participates in Zn(2+) binding.

This sequence belongs to the vitamin-B12 independent methionine synthase family. It depends on Zn(2+) as a cofactor.

The catalysed reaction is 5-methyltetrahydropteroyltri-L-glutamate + L-homocysteine = tetrahydropteroyltri-L-glutamate + L-methionine. The protein operates within amino-acid biosynthesis; L-methionine biosynthesis via de novo pathway; L-methionine from L-homocysteine (MetE route): step 1/1. In terms of biological role, catalyzes the transfer of a methyl group from 5-methyltetrahydrofolate to homocysteine resulting in methionine formation. The sequence is that of 5-methyltetrahydropteroyltriglutamate--homocysteine methyltransferase from Vibrio parahaemolyticus serotype O3:K6 (strain RIMD 2210633).